The chain runs to 93 residues: Small ribosomal subunit protein uS19m (93 aa).

The protein belongs to the universal ribosomal protein uS19 family.

It localises to the mitochondrion. This is Small ribosomal subunit protein uS19m (RPS19) from Marchantia polymorpha (Common liverwort).